The chain runs to 3685 residues: MLWWEEVEDCYEREDVQKKTFTKWVNAQFSKFGKQHIENLFSDLQDGRRLLDLLEGLTGQKLPKEKGSTRVHALNNVNKALRVLQNNNVDLVNIGSTDIVDGNHKLTLGLIWNIILHWQVKNVMKNIMAGLQQTNSEKILLSWVRQSTRNYPQVNVINFTTSWSDGLALNALIHSHRPDLFDWNSVVCQQSATQRLEHAFNIARYQLGIEKLLDPEDVDTTYPDKKSILMYITSLFQVLPQQVSIEAIQEVEMLPRPPKVTKEEHFQLHHQMHYSQQITVSLAQGYERTSSPKPRFKSYAYTQAAYVTTSDPTRSPFPSQHLEAPEDKSFGSSLMESEVNLDRYQTALEEVLSWLLSAEDTLQAQGEISNDVEVVKDQFHTHEGYMMDLTAHQGRVGNILQLGSKLIGTGKLSEDEETEVQEQMNLLNSRWECLRVASMEKQSNLHRVLMDLQNQKLKELNDWLTKTEERTRKMEEEPLGPDLEDLKRQVQQHKVLQEDLEQEQVRVNSLTHMVVVVDESSGDHATAALEEQLKVLGDRWANICRWTEDRWVLLQDILLKWQRLTEEQCLFSAWLSEKEDAVNKIHTTGFKDQNEMLSSLQKLAVLKADLEKKKQSMGKLYSLKQDLLSTLKNKSVTQKTEAWLDNFARCWDNLVQKLEKSTAQISQAVTTTQPSLTQTTVMETVTTVTTREQILVKHAQEELPPPPPQKKRQITVDSEIRKRLDVDITELHSWITRSEAVLQSPEFAIFRKEGNFSDLKEKVNAIEREKAEKFRKLQDASRSAQALVEQMVNEGVNADSIKQASEQLNSRWIEFCQLLSERLNWLEYQNNIIAFYNQLQQLEQMTTTAENWLKIQPTTPSEPTAIKSQLKICKDEVNRLSDLQPQIERLKIQSIALKEKGQGPMFLDADFVAFTNHFKQVFSDVQAREKELQTIFDTLPPMRYQETMSAIRTWVQQSETKLSIPQLSVTDYEIMEQRLGELQALQSSLQEQQSGLYYLSTTVKEMSKKAPSEISRKYQSEFEEIEGRWKKLSSQLVEHCQKLEEQMNKLRKIQNHIQTLKKWMAEVDVFLKEEWPALGDSEILKKQLKQCRLLVSDIQTIQPSLNSVNEGGQKIKNEAEPEFASRLETELKELNTQWDHMCQQVYARKEALKGGLEKTVSLQKDLSEMHEWMTQAEEEYLERDFEYKTPDELQKAVEEMKRAKEEAQQKEAKVKLLTESVNSVIAQAPPVAQEALKKELETLTTNYQWLCTRLNGKCKTLEEVWACWHELLSYLEKANKWLNEVEFKLKTTENIPGGAEEISEVLDSLENLMRHSEDNPNQIRILAQTLTDGGVMDELINEELETFNSRWRELHEEAVRRQKLLEQSIQSAQETEKSLHLIQESLTFIDKQLAAYIADKVDAAQMPQEAQKIQSDLTSHEISLEEMKKHNQGKEAAQRVLSQIDVAQKKLQDVSMKFRLFQKPANFEQRLQESKMILDEVKMHLPALETKSVEQEVVQSQLNHCVNLYKSLSEVKSEVEMVIKTGRQIVQKKQTENPKELDERVTALKLHYNELGAKVTERKQQLEKCLKLSRKMRKEMNVLTEWLAATDMELTKRSAVEGMPSNLDSEVAWGKATQKEIEKQKVHLKSITEVGEALKTVLGKKETLVEDKLSLLNSNWIAVTSRAEEWLNLLLEYQKHMETFDQNVDHITKWIIQADTLLDESEKKKPQQKEDVLKRLKAELNDIRPKVDSTRDQAANLMANRGDHCRKLVEPQISELNHRFAAISHRIKTGKASIPLKELEQFNSDIQKLLEPLEAEIQQGVNLKEEDFNKDMNEDNEGTVKELLQRGDNLQQRITDERKREEIKIKQQLLQTKHNALKDLRSQRRKKALEISHQWYQYKRQADDLLKCLDDIEKKLASLPEPRDERKIKEIDRELQKKKEELNAVRRQAEGLSEDGAAMAVEPTQIQLSKRWREIESKFAQFRRLNFAQIHTVREETMMVMTEDMPLEISYVPSTYLTEITHVSQALLEVEQLLNAPDLCAKDFEDLFKQEESLKNIKDSLQQSSGRIDIIHSKKTAALQSATPVERVKLQEALSQLDFQWEKVNKMYKDRQGRFDRSVEKWRRFHYDIKIFNQWLTEAEQFLRKTQIPENWEHAKYKWYLKELQDGIGQRQTVVRTLNATGEEIIQQSSKTDASILQEKLGSLNLRWQEVCKQLSDRKKRLEEQKNILSEFQRDLNEFVLWLEEADNIASIPLEPGKEQQLKEKLEQVKLLVEELPLRQGILKQLNETGGPVLVSAPISPEEQDKLENKLKQTNLQWIKVSRALPEKQGEIEAQIKDLGQLEKKLEDLEEQLNHLLLWLSPIRNQLEIYNQPNQEGPFDVKETEIAVQAKQPDVEEILSKGQHLYKEKPATQPVKRKLEDLSSEWKAVNRLLQELRAKQPDLAPGLTTIGASPTQTVTLVTQPVVTKETAISKLEMPSSLMLEVPALADFNRAWTELTDWLSLLDQVIKSQRVMVGDLEDINEMIIKQKATMQDLEQRRPQLEELITAAQNLKNKTSNQEARTIITDRIERIQNQWDEVQEHLQNRRQQLNEMLKDSTQWLEAKEEAEQVLGQARAKLESWKEGPYTVDAIQKKITETKQLAKDLRQWQTNVDVANDLALKLLRDYSADDTRKVHMITENINASWRSIHKRVSEREAALEETHRLLQQFPLDLEKFLAWLTEAETTANVLQDATRKERLLEDSKGVKELMKQWQDLQGEIEAHTDVYHNLDENSQKILRSLEGSDDAVLLQRRLDNMNFKWSELRKKSLNIRSHLEASSDQWKRLHLSLQELLVWLQLKDDELSRQAPIGGDFPAVQKQNDVHRAFKRELKTKEPVIMSTLETVRIFLTEQPLEGLEKLYQEPRELPPEERAQNVTRLLRKQAEEVNTEWEKLNLHSADWQRKIDETLERLRELQEATDELDLKLRQAEVIKGSWQPVGDLLIDSLQDHLEKVKALRGEIAPLKENVSHVNDLARQLTTLGIQLSPYNLSTLEDLNTRWKLLQVAVEDRVRQLHEAHRDFGPASQHFLSTSVQGPWERAISPNKVPYYINHETQTTCWDHPKMTELYQSLADLNNVRFSAYRTAMKLRRLQKALCLDLLSLSAACDALDQHNLKQNDQPMDILQIINCLTTIYDRLEQEHNNLVNVPLCVDMCLNWLLNVYDTGRTGRIRVLSFKTGIISLCKAHLEDKYRYLFKQVASSTGFCDQRRLGLLLHDSIQIPRQLGEVASFGGSNIEPSVRSCFQFANNKPEIEAALFLDWMRLEPQSMVWLPVLHRVAAAETAKHQAKCNICKECPIIGFRYRSLKHFNYDICQSCFFSGRVAKGHKMHYPMVEYCTPTTSGEDVRDFAKVLKNKFRTKRYFAKHPRMGYLPVQTVLEGDNMETPVTLINFWPVDSAPASSPQLSHDDTHSRIEHYASRLAEMENSNGSYLNDSISPNESIDDEHLLIQHYCQSLNQDSPLSQPRSPAQILISLESEERGELERILADLEEENRNLQAEYDRLKQQHEHKGLSPLPSPPEMMPTSPQSPRDAELIAEAKLLRQHKGRLEARMQILEDHNKQLESQLHRLRQLLEQPQAEAKVNGTTVSSPSTSLQRSDSSQPMLLRVVGSQTSDSMGEEDLLSPPQDTSTGLEEVMEQLNNSFPSSRGRNTPGKPMREDTM.

The tract at residues 1-240 (MLWWEEVEDC…YITSLFQVLP (240 aa)) is actin-binding. 2 Calponin-homology (CH) domains span residues 15–119 (DVQK…LHWQ) and 134–240 (TNSE…QVLP). The tract at residues 63–72 (PKEKGSTRVH) is ANK2- and ANK-3 binding. Spectrin repeat units follow at residues 339 to 447 (VNLD…NLHR), 448 to 556 (VLMD…LLQD), 559 to 667 (LKWQ…QISQ), 719 to 828 (EIRK…WLEY), 830 to 934 (NNII…ELQT), 943 to 1045 (RYQE…KLEE), 1048 to 1154 (NKLR…ALKG), 1157 to 1263 (EKTV…TLEE), 1266 to 1367 (ACWH…LLEQ), 1368 to 1463 (SIQS…LFQK), 1468 to 1568 (EQRL…QLEK), 1571 to 1676 (KLSR…LLLE), 1679 to 1778 (KHME…KASI), 1779 to 1874 (PLKE…KALE), 1877 to 1979 (HQWY…TVRE), 1992 to 2101 (EISY…RFDR), 2104 to 2208 (EKWR…RLEE), 2211 to 2318 (NILS…EIEA), 2319 to 2423 (QIKD…LRAK), 2475 to 2577 (FNRA…QLNE), 2580 to 2686 (KDST…ALEE), 2689 to 2802 (RLLQ…HLEA), 2808 to 2930 (KRLH…RKID), and 2935 to 3040 (RLRE…QLHE). N340 is subject to Phosphothreonine. Residues Y344 and L348 each carry the phosphoserine modification. E519, S616, and S629 each carry phosphothreonine. Residues 1415 to 1913 (SDLTSHEISL…PEPRDERKIK (499 aa)) are interaction with SYNM. The region spanning 3055–3088 (TSVQGPWERAISPNKVPYYINHETQTTCWDHPKM) is the WW domain. Residues 3058–3408 (QGPWERAISP…TVLEGDNMET (351 aa)) are interaction with SYNM. Residues 3308 to 3364 (KHQAKCNICKECPIIGFRYRSLKHFNYDICQSCFFSGRVAKGHKMHYPMVEYCTPTT) form a ZZ-type; degenerate zinc finger. 4 residues coordinate Zn(2+): C3313, C3316, C3337, and C3340. The binds to SNTB1 stretch occupies residues 3466–3518 (DDEHLLIQHYCQSLNQDSPLSQPRSPAQILISLESEERGELERILADLEEENR). S3483, S3490, and S3500 each carry phosphoserine. 2 disordered regions span residues 3528 to 3554 (KQQH…QSPR) and 3603 to 3685 (EAKV…EDTM). 2 stretches are compositionally biased toward polar residues: residues 3607–3626 (NGTT…SSQP) and 3662–3673 (QLNNSFPSSRGR). Phosphoserine occurs at positions 3612, 3613, 3617, 3623, 3624, and 3666.

Interacts with SYNM. Interacts with the syntrophins SNTA1, SNTB1, SNTB2, SNTG1 and SNTG2. Interacts with KRT19. Component of the dystrophin-associated glycoprotein complex which is composed of three subcomplexes: a cytoplasmic complex comprised of DMD (or UTRN), DTNA and a number of syntrophins, such as SNTB1, SNTB2, SNTG1 and SNTG2, the transmembrane dystroglycan complex, and the sarcoglycan-sarcospan complex. Interacts with DAG1 (betaDAG1) with DMD; the interaction is inhibited by phosphorylation on the PPXY motif of DAG1. Interacts with CMYA5. Directly interacts with ANK2 and ANK3; these interactions do not interfere with betaDAG1-binding and are necessary for proper localization in muscle cells. Identified in a dystroglycan complex that contains at least PRX, DRP2, UTRN, DMD and DAG1. Interacts with DTNB. Interacts with PGM5; the interaction is direct. Interacts with NOS1; localizes NOS1 to sarcolemma in muscle cells. In terms of tissue distribution, expressed in muscle fibers accumulating in the costameres of myoplasm at the sarcolemma. Expressed in brain, muscle, kidney, lung and testis. Most tissues contain transcripts of multiple isoforms. Isoform 15: Only isoform to be detected in heart and liver and is also expressed in brain, testis and hepatoma cells.

It localises to the cell membrane. It is found in the sarcolemma. Its subcellular location is the cytoplasm. The protein resides in the cytoskeleton. The protein localises to the postsynaptic cell membrane. Anchors the extracellular matrix to the cytoskeleton via F-actin. Ligand for dystroglycan. Component of the dystrophin-associated glycoprotein complex which accumulates at the neuromuscular junction (NMJ) and at a variety of synapses in the peripheral and central nervous systems and has a structural function in stabilizing the sarcolemma. Also implicated in signaling events and synaptic transmission. The sequence is that of Dystrophin from Homo sapiens (Human).